The primary structure comprises 178 residues: ATP synthase subunit delta (178 aa).

Belongs to the ATPase delta chain family. F-type ATPases have 2 components, F(1) - the catalytic core - and F(0) - the membrane proton channel. F(1) has five subunits: alpha(3), beta(3), gamma(1), delta(1), epsilon(1). F(0) has three main subunits: a(1), b(2) and c(10-14). The alpha and beta chains form an alternating ring which encloses part of the gamma chain. F(1) is attached to F(0) by a central stalk formed by the gamma and epsilon chains, while a peripheral stalk is formed by the delta and b chains.

It localises to the cell inner membrane. Its function is as follows. F(1)F(0) ATP synthase produces ATP from ADP in the presence of a proton or sodium gradient. F-type ATPases consist of two structural domains, F(1) containing the extramembraneous catalytic core and F(0) containing the membrane proton channel, linked together by a central stalk and a peripheral stalk. During catalysis, ATP synthesis in the catalytic domain of F(1) is coupled via a rotary mechanism of the central stalk subunits to proton translocation. In terms of biological role, this protein is part of the stalk that links CF(0) to CF(1). It either transmits conformational changes from CF(0) to CF(1) or is implicated in proton conduction. This is ATP synthase subunit delta from Acinetobacter baumannii (strain SDF).